The sequence spans 404 residues: NADH-quinone oxidoreductase subunit D 1 (404 aa).

The protein belongs to the complex I 49 kDa subunit family. NDH-1 is composed of 14 different subunits. Subunits NuoB, C, D, E, F, and G constitute the peripheral sector of the complex.

It localises to the cell membrane. The enzyme catalyses a quinone + NADH + 5 H(+)(in) = a quinol + NAD(+) + 4 H(+)(out). Functionally, NDH-1 shuttles electrons from NADH, via FMN and iron-sulfur (Fe-S) centers, to quinones in the respiratory chain. The immediate electron acceptor for the enzyme in this species is believed to be a menaquinone. Couples the redox reaction to proton translocation (for every two electrons transferred, four hydrogen ions are translocated across the cytoplasmic membrane), and thus conserves the redox energy in a proton gradient. The polypeptide is NADH-quinone oxidoreductase subunit D 1 (Symbiobacterium thermophilum (strain DSM 24528 / JCM 14929 / IAM 14863 / T)).